A 487-amino-acid polypeptide reads, in one-letter code: V-type proton ATPase subunit B3 (487 aa).

It belongs to the ATPase alpha/beta chains family. V-ATPase is a heteromultimeric enzyme composed of a peripheral catalytic V1 complex (components A to H) attached to an integral membrane V0 proton pore complex (components: a, c, c'', d and e).

It is found in the vacuole membrane. Functionally, non-catalytic subunit of the peripheral V1 complex of vacuolar ATPase. V-ATPase is responsible for acidifying a variety of intracellular compartments in eukaryotic cells. The sequence is that of V-type proton ATPase subunit B3 (VHA-B3) from Arabidopsis thaliana (Mouse-ear cress).